A 254-amino-acid chain; its full sequence is MGPGLAASHVSFPDSLLAKMRDLLQYVACFFAFFSAGFLVVATWTDCWMVNADDSLEVSTKCRGLWWECVTNAFDGIRTCDEYDSILAEHSLKLVVTRALMITADILAGFGFITLLLGLDCVKFLPDEPYIKVRISFVAGTTLLIAGAPGIIGSVWYAVDVYVERSSLVLHNIFLGIQYKFGWSCWLGMAGSLGCFLAGAILTCCLYLFKDVGPERSYPYSTRKAYSTTAVSMPRSHAIPRTQTAKMYAVDTRV.

At 1–22 (MGPGLAASHVSFPDSLLAKMRD) the chain is on the cytoplasmic side. Residues 23–43 (LLQYVACFFAFFSAGFLVVAT) traverse the membrane as a helical segment. The Extracellular portion of the chain corresponds to 44-98 (WTDCWMVNADDSLEVSTKCRGLWWECVTNAFDGIRTCDEYDSILAEHSLKLVVTR). The chain crosses the membrane as a helical span at residues 99–119 (ALMITADILAGFGFITLLLGL). Residues 120–134 (DCVKFLPDEPYIKVR) lie on the Cytoplasmic side of the membrane. Residues 135–155 (ISFVAGTTLLIAGAPGIIGSV) form a helical membrane-spanning segment. Residues 156–188 (WYAVDVYVERSSLVLHNIFLGIQYKFGWSCWLG) lie on the Extracellular side of the membrane. A helical membrane pass occupies residues 189–209 (MAGSLGCFLAGAILTCCLYLF). Over 210 to 254 (KDVGPERSYPYSTRKAYSTTAVSMPRSHAIPRTQTAKMYAVDTRV) the chain is Cytoplasmic. The Interaction with TJP1 motif lies at 252–254 (TRV).

This sequence belongs to the claudin family. In terms of assembly, can form heteropolymeric tight junction strands with other claudins. Interacts with CLDN19. Interacts (via PDZ-binding motif TRV) with TJP1 (via PDZ domain). Cannot form tight junction strands on its own. Expressed preferentially in kidney.

The protein resides in the cell junction. The protein localises to the tight junction. Its subcellular location is the cell membrane. It carries out the reaction Mg(2+)(in) = Mg(2+)(out). It catalyses the reaction Ca(2+)(in) = Ca(2+)(out). The enzyme catalyses Na(+)(in) = Na(+)(out). The catalysed reaction is K(+)(in) = K(+)(out). It carries out the reaction Rb(+)(in) = Rb(+)(out). It catalyses the reaction Cs(+)(in) = Cs(+)(out). The enzyme catalyses Li(+)(in) = Li(+)(out). In terms of biological role, forms paracellular channels: coassembles with CLDN19 into tight junction strands with cation-selective channels through the strands, conveying epithelial permeability in a process known as paracellular tight junction permeability. Involved in the maintenance of ion gradients along the nephron. In the thick ascending limb (TAL) of Henle's loop, facilitates sodium paracellular permeability from the interstitial compartment to the lumen, contributing to the lumen-positive transepithelial potential that drives paracellular magnesium and calcium reabsorption. The sequence is that of Claudin-16 (CLDN16) from Bos taurus (Bovine).